The sequence spans 87 residues: HssA/B-like protein 56 (87 aa).

It belongs to the hssA/B family.

The protein is HssA/B-like protein 56 (hssl56) of Dictyostelium discoideum (Social amoeba).